We begin with the raw amino-acid sequence, 310 residues long: Ribosomal protein uL3 glutamine methyltransferase (310 aa).

It belongs to the protein N5-glutamine methyltransferase family. PrmB subfamily.

It catalyses the reaction L-glutaminyl-[ribosomal protein uL3] + S-adenosyl-L-methionine = N(5)-methyl-L-glutaminyl-[ribosomal protein uL3] + S-adenosyl-L-homocysteine + H(+). In terms of biological role, methylates large ribosomal subunit protein uL3 on a specific glutamine residue. The chain is Ribosomal protein uL3 glutamine methyltransferase from Vibrio anguillarum (strain ATCC 68554 / 775) (Listonella anguillarum).